We begin with the raw amino-acid sequence, 242 residues long: NAD(P)H-quinone oxidoreductase subunit K (242 aa).

4 residues coordinate [4Fe-4S] cluster: Cys60, Cys61, Cys125, and Cys156.

It belongs to the complex I 20 kDa subunit family. In terms of assembly, NDH-1 can be composed of about 15 different subunits; different subcomplexes with different compositions have been identified which probably have different functions. [4Fe-4S] cluster is required as a cofactor.

The protein resides in the cellular thylakoid membrane. The enzyme catalyses a plastoquinone + NADH + (n+1) H(+)(in) = a plastoquinol + NAD(+) + n H(+)(out). It carries out the reaction a plastoquinone + NADPH + (n+1) H(+)(in) = a plastoquinol + NADP(+) + n H(+)(out). NDH-1 shuttles electrons from an unknown electron donor, via FMN and iron-sulfur (Fe-S) centers, to quinones in the respiratory and/or the photosynthetic chain. The immediate electron acceptor for the enzyme in this species is believed to be plastoquinone. Couples the redox reaction to proton translocation, and thus conserves the redox energy in a proton gradient. Cyanobacterial NDH-1 also plays a role in inorganic carbon-concentration. This is NAD(P)H-quinone oxidoreductase subunit K from Prochlorococcus marinus (strain SARG / CCMP1375 / SS120).